Reading from the N-terminus, the 260-residue chain is Potassium inward rectifier (Kir)-like channel 3 (260 aa).

Positions 1–34 (MPMTPSEFKNRLLFGSLPRSSSDPTDLQFTEPNV) are disordered. Residues 1-68 (MPMTPSEFKN…EQSVSKSIAR (68 aa)) are Cytoplasmic-facing. Positions 18-31 (PRSSSDPTDLQFTE) are enriched in polar residues. The helical transmembrane segment at 69–89 (QALALLVVYLSLGVLIYWLTL) threads the bilayer. The segment at residues 127–146 (DSFCFSVMMVTTVGFGDRAF) is an intramembrane region (pore-forming). A helical membrane pass occupies residues 153–173 (FLAAVWLLVSTLAVARAFLFL). Residues 174–260 (ADARADKRNR…LVDLTTATSV (87 aa)) lie on the Cytoplasmic side of the membrane. 2 consecutive EF-hand domains span residues 190 to 225 (LGESISISQFFAADIDNDGRLSLAEFAIYKLKQMEK) and 229 to 256 (EDFIQICNQFDKLDRTQSGRITLVDLTT). Asp203, Asp205, Asp207, Arg209, Glu214, Asp242, Ser246, Arg248, and Asp253 together coordinate Ca(2+).

It belongs to the two pore domain potassium channel (TC 1.A.1.7) family. In terms of assembly, homotetramer. Expressed in hydathodes and the vascular tissues of roots, stems, leaves and flowers.

The protein localises to the vacuole membrane. Functionally, probable calcium-activated potassium channel. The polypeptide is Potassium inward rectifier (Kir)-like channel 3 (KCO3) (Arabidopsis thaliana (Mouse-ear cress)).